A 409-amino-acid chain; its full sequence is Phenoxybenzoate dioxygenase subunit alpha (409 aa).

The Rieske domain maps to 45–149 (WQPVALSADV…VEERYGLVFA (105 aa)). [2Fe-2S] cluster is bound by residues cysteine 85, histidine 87, cysteine 104, and histidine 107. Histidine 210 and histidine 215 together coordinate Fe cation.

Belongs to the bacterial ring-hydroxylating dioxygenase alpha subunit family. This dioxygenase system consists of two proteins: the alpha subunit (PobA) and a subunit (PobB) that acts as a ferredoxin and a ferredoxin reductase. The cofactor is [2Fe-2S] cluster. Fe cation is required as a cofactor.

It functions in the pathway aromatic compound metabolism; carboxydiphenyl ether degradation. In terms of biological role, degrades exclusively diarylether compounds having carboxyl groups in the 3- or 4-position. Yields a hemiacetal that spontaneously hydrolyzes to phenol and protocatechuate. In Ectopseudomonas oleovorans (Pseudomonas oleovorans), this protein is Phenoxybenzoate dioxygenase subunit alpha (pobA).